A 64-amino-acid polypeptide reads, in one-letter code: Large ribosomal subunit protein bL35 (64 aa).

The protein belongs to the bacterial ribosomal protein bL35 family.

The sequence is that of Large ribosomal subunit protein bL35 from Chlorobium chlorochromatii (strain CaD3).